We begin with the raw amino-acid sequence, 548 residues long: Nonribosomal peptide synthetase 8 (548 aa).

One can recognise a Carrier domain in the interval 1–77 (MNSLDQWRDT…QLRGENRSGP (77 aa)). Residue Ser-35 is modified to O-(pantetheine 4'-phosphoryl)serine. The tract at residues 122–537 (MAPISSIQEF…FKSLIAELAA (416 aa)) is condensation.

The protein belongs to the NRP synthetase family.

Its pathway is mycotoxin biosynthesis. In terms of biological role, nonribosomal peptide synthetase; part of the gene cluster that mediates the biosynthesis of fumonisins B1 (FB1), B2 (FB2), B3 (FB3), and B4 (FB4), which are carcinogenic mycotoxins. Within the pathway FUM14 catalyzes esterification of CoA-activated tricarballylic acid to the C-14 and C-15 hydroxyls of the fumonisin backbone. The biosynthesis starts with the FUM1-catalyzed carbon chain assembly from one molecule of acetyl-CoA, eight molecules of malonyl-CoA, and two molecules of methionine (in S-adenosyl form). The C18 polyketide chain is released from the enzyme by a nucleophilic attack of a carbanion, which is derived from R-carbon of alanine by decarboxylation, on the carbonyl carbon of polyketide acyl chain. This step is catalyzed by the pyridoxal 5'-phosphate-dependent aminoacyl transferase FUM8. The resultant 3-keto intermediate is then stereospecifically reduced to a 3-hydroxyl product by reductase FUM13. Subsequent oxidations at C-10 by the cytochrome P450 monooxygenase FUM2, C-14 and C-15 by FUM6, FUM12 or FUM15, tricarballylic esterification of the hydroxyl groups on C-14 and C-15 by acyltransferase FUM14, and C-5 hydroxylation by 2-keto-glutarate-dependent dioxygenase FUM3 furnish the biosynthesis of fumonisins. The tricarballylic moieties are most likely derived from the citric acid cycle, and their addition to the carbon backbone may involve FUM7, FUM10, FUM11 and FUM14. The chain is Nonribosomal peptide synthetase 8 from Gibberella moniliformis (strain M3125 / FGSC 7600) (Maize ear and stalk rot fungus).